The following is a 223-amino-acid chain: Glutathione-specific gamma-glutamylcyclotransferase 1 (223 aa).

The interval 1-26 (MKQESASQSTPPPSLSPAPSSAQPSW) is disordered. 36-41 (IFGYGS) contributes to the substrate binding site. The active-site Proton acceptor is the glutamate 116.

It belongs to the gamma-glutamylcyclotransferase family. ChaC subfamily. Interacts with NOTCH1 (via extracellular region). As to expression, widely expressed, with high expression in forebrain and anterior spinal cord. Expressed at intermediate level in the dorsal aorta and heart. Present throughout adult brain (at protein level).

It is found in the cytoplasm. The protein localises to the cytosol. The protein resides in the golgi apparatus. It localises to the trans-Golgi network. It carries out the reaction glutathione = L-cysteinylglycine + 5-oxo-L-proline. Functionally, catalyzes the cleavage of glutathione into 5-oxo-L-proline and a Cys-Gly dipeptide. Acts specifically on glutathione, but not on other gamma-glutamyl peptides. Glutathione depletion is an important factor for apoptosis initiation and execution. Acts as a pro-apoptotic component of the unfolded protein response pathway by mediating the pro-apoptotic effects of the ATF4-ATF3-DDIT3/CHOP cascade. Negative regulator of Notch signaling pathway involved in embryonic neurogenesis: acts by inhibiting Notch cleavage by furin, maintaining Notch in an immature inactive form, thereby promoting neurogenesis in embryos. In Mus musculus (Mouse), this protein is Glutathione-specific gamma-glutamylcyclotransferase 1.